The following is a 265-amino-acid chain: tRNA (guanine-N(7)-)-methyltransferase (265 aa).

S-adenosyl-L-methionine is bound by residues Glu96, Glu121, Asp148, and Asp170. Residue Asp170 is part of the active site. Substrate contacts are provided by Lys174 and Asp206.

Belongs to the class I-like SAM-binding methyltransferase superfamily. TrmB family.

It carries out the reaction guanosine(46) in tRNA + S-adenosyl-L-methionine = N(7)-methylguanosine(46) in tRNA + S-adenosyl-L-homocysteine. The protein operates within tRNA modification; N(7)-methylguanine-tRNA biosynthesis. In terms of biological role, catalyzes the formation of N(7)-methylguanine at position 46 (m7G46) in tRNA. This is tRNA (guanine-N(7)-)-methyltransferase from Rhodopseudomonas palustris (strain ATCC BAA-98 / CGA009).